Here is an 85-residue protein sequence, read N- to C-terminus: Cell division protein ZapA (85 aa).

Residues 59 to 85 adopt a coiled-coil conformation; it reads TAVNVVHDYMKLQEKYEILERQLKEKE.

The protein belongs to the ZapA family. Type 2 subfamily. In terms of assembly, homodimer. Interacts with FtsZ.

The protein localises to the cytoplasm. Its function is as follows. Activator of cell division through the inhibition of FtsZ GTPase activity, therefore promoting FtsZ assembly into bundles of protofilaments necessary for the formation of the division Z ring. It is recruited early at mid-cell but it is not essential for cell division. The sequence is that of Cell division protein ZapA from Bacillus velezensis (strain DSM 23117 / BGSC 10A6 / LMG 26770 / FZB42) (Bacillus amyloliquefaciens subsp. plantarum).